Reading from the N-terminus, the 249-residue chain is Derlin-2 (249 aa).

Topologically, residues 1–21 are cytoplasmic; it reads MAQAVEEWYRQMPIITRSYLT. Residues 22 to 42 traverse the membrane as a helical segment; the sequence is AAVVTTVGCTLEIISPYHLYL. Topologically, residues 43 to 96 are lumenal; that stretch reads NPKLVVQHYEIWRLVTNFLYFRKMDLDFLFHMFFLARYCKLLEENSFRGRTADF. Residues 97-117 traverse the membrane as a helical segment; sequence FYMLLFGATVLTGIVLIGGMI. Residues 118–122 are Cytoplasmic-facing; that stretch reads PYISE. A helical membrane pass occupies residues 123 to 143; that stretch reads TFARILFLSNSLTFMMVYVWS. Topologically, residues 144 to 152 are lumenal; that stretch reads KHNPFIHMS. A helical membrane pass occupies residues 153-173; that stretch reads FLGLFTFTAAYLPWVLLGFSI. Over 174 to 249 the chain is Cytoplasmic; that stretch reads LVGSSTWVDL…GAMGADPQAQ (76 aa).

This sequence belongs to the derlin family.

The protein resides in the endoplasmic reticulum membrane. Functionally, may be involved in the degradation process of specific misfolded endoplasmic reticulum (ER) luminal proteins. This chain is Derlin-2 (DER2), found in Oryza sativa subsp. japonica (Rice).